The sequence spans 281 residues: Ermin (281 aa).

Polar residues-rich tracts occupy residues 1 to 12 (MTDTPETLSGTE), 21 to 31 (NGQQPSSQTRQ), and 135 to 147 (AQQQ…DAST). Disordered stretches follow at residues 1 to 80 (MTDT…KILN), 110 to 147 (REGH…DAST), and 167 to 248 (KCDE…GDIA). Positions 169-197 (DEEEEEEEEVWNEEINEEDVDECAEEEDE) are enriched in acidic residues. Residues 198–223 (VRVIEFKRKHREGSPLKEESLAREDS) show a composition bias toward basic and acidic residues. 4 positions are modified to phosphoserine: Ser-211, Ser-223, Ser-227, and Ser-230. A Phosphothreonine modification is found at Thr-234. The interval 262–281 (KIRKGNTKQRIDEFESMMHL) is binds actin.

As to quaternary structure, binds actin. Brain and spinal cord. Exclusively expressed by the oligodendrocytes. Appears at a late stage during myelination, and in the mature nerves, it is localized to the outer cytoplasmic lip of the myelin sheath and the paranodal loops.

The protein localises to the cytoplasm. It localises to the cytoskeleton. In terms of biological role, plays a role in cytoskeletal rearrangements during the late wrapping and/or compaction phases of myelinogenesis as well as in maintenance and stability of myelin sheath in the adult. May play an important role in late-stage oligodendroglia maturation, myelin/Ranvier node formation during CNS development, and in the maintenance and plasticity of related structures in the mature CNS. In Mus musculus (Mouse), this protein is Ermin (Ermn).